The following is a 452-amino-acid chain: Chromosomal replication initiator protein DnaA (452 aa).

A domain I, interacts with DnaA modulators region spans residues 1 to 72 (MPDMLTLWTD…LVEYAYQAAH (72 aa)). The domain II stretch occupies residues 72–114 (HEDIQPVLILENERQQQATLKAKTAPVAAGEPVEPTPTFMKET). The domain III, AAA+ region stretch occupies residues 115 to 331 (ALNSRYTFDT…GALARVQAYS (217 aa)). The ATP site is built by Gly-159, Gly-161, Lys-162, and Thr-163. The domain IV, binds dsDNA stretch occupies residues 332-452 (QLMHQPIATD…IDSLKDDLRR (121 aa)).

Belongs to the DnaA family. Oligomerizes as a right-handed, spiral filament on DNA at oriC.

Its subcellular location is the cytoplasm. Its function is as follows. Plays an essential role in the initiation and regulation of chromosomal replication. ATP-DnaA binds to the origin of replication (oriC) to initiate formation of the DNA replication initiation complex once per cell cycle. Binds the DnaA box (a 9 base pair repeat at the origin) and separates the double-stranded (ds)DNA. Forms a right-handed helical filament on oriC DNA; dsDNA binds to the exterior of the filament while single-stranded (ss)DNA is stabiized in the filament's interior. The ATP-DnaA-oriC complex binds and stabilizes one strand of the AT-rich DNA unwinding element (DUE), permitting loading of DNA polymerase. After initiation quickly degrades to an ADP-DnaA complex that is not apt for DNA replication. Binds acidic phospholipids. The protein is Chromosomal replication initiator protein DnaA of Levilactobacillus brevis (strain ATCC 367 / BCRC 12310 / CIP 105137 / JCM 1170 / LMG 11437 / NCIMB 947 / NCTC 947) (Lactobacillus brevis).